The following is a 235-amino-acid chain: tRNA (guanine-N(1)-)-methyltransferase (235 aa).

S-adenosyl-L-methionine-binding positions include Gly-113 and 133–138 (IGDYIL).

It belongs to the RNA methyltransferase TrmD family. Homodimer.

It localises to the cytoplasm. The catalysed reaction is guanosine(37) in tRNA + S-adenosyl-L-methionine = N(1)-methylguanosine(37) in tRNA + S-adenosyl-L-homocysteine + H(+). Functionally, specifically methylates guanosine-37 in various tRNAs. In Wolbachia sp. subsp. Brugia malayi (strain TRS), this protein is tRNA (guanine-N(1)-)-methyltransferase.